Reading from the N-terminus, the 152-residue chain is Ribosome maturation factor RimP (152 aa).

It belongs to the RimP family.

Its subcellular location is the cytoplasm. Functionally, required for maturation of 30S ribosomal subunits. The sequence is that of Ribosome maturation factor RimP from Desulfitobacterium hafniense (strain DSM 10664 / DCB-2).